The following is a 290-amino-acid chain: Glucuronoxylan 4-O-methyltransferase 2 (290 aa).

A helical transmembrane segment spans residues 8–28 (FISSKLIFICCSILVLFILFL).

The protein belongs to the methyltransferase superfamily. In terms of tissue distribution, expressed in roots, rosette leaves and stems.

Its subcellular location is the golgi apparatus membrane. It carries out the reaction glucuronoxylan D-glucuronate + n S-adenosyl-L-methionine = glucuronoxylan 4-O-methyl-D-glucuronate + n S-adenosyl-L-homocysteine + n H(+). Methyltransferase catalyzing 4-O-methylation of glucuronic acid side chains on xylan. In Arabidopsis thaliana (Mouse-ear cress), this protein is Glucuronoxylan 4-O-methyltransferase 2 (GXM2).